The following is a 227-amino-acid chain: Mediator of RNA polymerase II transcription subunit 18 (227 aa).

The protein belongs to the Mediator complex subunit 18 family. In terms of assembly, component of the Mediator complex.

The protein localises to the nucleus. Its function is as follows. Component of the Mediator complex, a coactivator involved in the regulated transcription of nearly all RNA polymerase II-dependent genes. Mediator functions as a bridge to convey information from gene-specific regulatory proteins to the basal RNA polymerase II transcription machinery. Mediator is recruited to promoters by direct interactions with regulatory proteins and serves as a scaffold for the assembly of a functional preinitiation complex with RNA polymerase II and the general transcription factors. This chain is Mediator of RNA polymerase II transcription subunit 18 (mdt-18), found in Caenorhabditis briggsae.